The primary structure comprises 1235 residues: Ubiquitin carboxyl-terminal hydrolase 40 (1235 aa).

The region spanning 41–482 (SGIRNQGGTC…SAYMLFYRKS (442 aa)) is the USP domain. Catalysis depends on Cys50, which acts as the Nucleophile. Catalysis depends on His305, which acts as the Proton acceptor. Residues 1180-1190 (IRDDTGKEKQK) are compositionally biased toward basic and acidic residues. The segment at 1180–1235 (IRDDTGKEKQKQRALGRRKSQEALHEQSSYILSSAETPARPRAPETSLSIHVGSFR) is disordered. Residues 1205 to 1215 (EQSSYILSSAE) show a composition bias toward polar residues.

The protein belongs to the peptidase C19 family. Broadly expressed.

The enzyme catalyses Thiol-dependent hydrolysis of ester, thioester, amide, peptide and isopeptide bonds formed by the C-terminal Gly of ubiquitin (a 76-residue protein attached to proteins as an intracellular targeting signal).. Functionally, may be catalytically inactive. The sequence is that of Ubiquitin carboxyl-terminal hydrolase 40 (USP40) from Homo sapiens (Human).